The chain runs to 151 residues: Ribosome-binding factor A (151 aa).

The disordered stretch occupies residues arginine 120–glutamate 151.

Belongs to the RbfA family. As to quaternary structure, monomer. Binds 30S ribosomal subunits, but not 50S ribosomal subunits or 70S ribosomes.

Its subcellular location is the cytoplasm. Its function is as follows. One of several proteins that assist in the late maturation steps of the functional core of the 30S ribosomal subunit. Associates with free 30S ribosomal subunits (but not with 30S subunits that are part of 70S ribosomes or polysomes). Required for efficient processing of 16S rRNA. May interact with the 5'-terminal helix region of 16S rRNA. The protein is Ribosome-binding factor A of Xanthobacter autotrophicus (strain ATCC BAA-1158 / Py2).